The following is a 221-amino-acid chain: Inositol phosphorylceramide synthase regulatory subunit KEI1 (221 aa).

Helical transmembrane passes span 11-31, 54-74, 79-99, and 154-174; these read SFLGFMPLYLAVEIVLGISIL, WIAYLWSVFTLIVFSQGLYLI, LLVFSQICVLYTIDTISTCFF, and ILITLVSLIFRFYFNFILASF. Positions 176-221 are COPI vesicle-binding; it reads QELLHHPKYLVDRDDVEQNLKNKPIWKRLWAKSQKGCYKLCKNLLE.

The protein belongs to the KEI1 family. Component of the inositol phosphorylceramide synthase complex composed of at least AUR1 and KEI1. Interacts (via C-terminal region) with COP1 and SEC21. Note=The interaction with AUR1 seems to occur with the full-length protein before cleavage by KEX2 since both full-length and short chains of KEI1 interact with AUR1. Post-translationally, the precursor protein is cleaved into two polypeptide chains, KEI1N and KEI1C. The cleavage is performed in the Golgi apparatus by the KEX2 protease which recognizes residue Arg-135. Generation of KEX2 cleavage site may have been an accidental event in evolution without specific advantages or disadvantages in IPC synthesis.

It is found in the golgi apparatus membrane. In terms of biological role, regulatory component of the inositol phosphorylceramide (ICP) synthase which catalyzes the addition of a phosphorylinositol group onto ceramide to form inositol phosphorylceramide, an essential step in sphingolipid biosynthesis. Helps the medial Golgi localization of IPC synthase in a COPI vesicle-dependent manner. This is Inositol phosphorylceramide synthase regulatory subunit KEI1 (KEI1) from Saccharomyces cerevisiae (strain ATCC 204508 / S288c) (Baker's yeast).